A 208-amino-acid polypeptide reads, in one-letter code: MELKVINTAGAETGEVISLDDKVFAAKVSEHAVYLDVKSLLANKRQGTHKVKNRSEVRGGGKKPYRQKGTGHARQGSSRSGLMSGGGSIFGPQPHGYDLKVNRKIKRLARRSALSSKAGEGRIIVIEDFTFEQIKTRQFADILKNLGLDQKKTLVLLPEHNEIINRSGRNIPVLNIRVADQASTYDILDCQTVVMQKAAVKKIEETLA.

The segment at 45–84 is disordered; sequence RQGTHKVKNRSEVRGGGKKPYRQKGTGHARQGSSRSGLMS. Positions 60–71 are enriched in basic residues; that stretch reads GGKKPYRQKGTG.

This sequence belongs to the universal ribosomal protein uL4 family. In terms of assembly, part of the 50S ribosomal subunit.

Its function is as follows. One of the primary rRNA binding proteins, this protein initially binds near the 5'-end of the 23S rRNA. It is important during the early stages of 50S assembly. It makes multiple contacts with different domains of the 23S rRNA in the assembled 50S subunit and ribosome. In terms of biological role, forms part of the polypeptide exit tunnel. This Prosthecochloris aestuarii (strain DSM 271 / SK 413) protein is Large ribosomal subunit protein uL4.